A 321-amino-acid polypeptide reads, in one-letter code: Transcriptional activator protein Pur-alpha (321 aa).

The segment at 1–54 (MADRDSGSEQGGAALGSGGSLGHPGSGSGSGGGGGGGGGGGGSGGGGGAPGGLQ) is disordered. Alanine 2 carries the post-translational modification N-acetylalanine. Over residues 9 to 51 (EQGGAALGSGGSLGHPGSGSGSGGGGGGGGGGGGSGGGGGAPG) the composition is skewed to gly residues. A Phosphoserine modification is found at serine 181. Positions 294–313 (LHQQQQQQQEETTAATLLLQ) are enriched in low complexity. The segment at 294–321 (LHQQQQQQQEETTAATLLLQGEEEGEED) is disordered.

It belongs to the PUR DNA-binding protein family. In terms of assembly, homodimer, heterodimer with PURB and heterotrimer with PURB and YBX1/Y-box protein 1. Interacts with FMR1; this interaction occurs in association with polyribosome.

The protein resides in the nucleus. This is a probable transcription activator that specifically binds the purine-rich single strand of the PUR element located upstream of the c-Myc gene. May play a role in the initiation of DNA replication and in recombination. This is Transcriptional activator protein Pur-alpha (Pura) from Mus musculus (Mouse).